The primary structure comprises 469 residues: Neuraminidase (469 aa).

Residues 1–6 lie on the Intravirion side of the membrane; that stretch reads MNPNQK. The helical transmembrane segment at 7–27 threads the bilayer; sequence IITIGSICMVVGIISLILQIG. Residues 11–33 are involved in apical transport and lipid raft association; the sequence is GSICMVVGIISLILQIGNIISIW. At 28 to 469 the chain is on the virion surface side; it reads NIISIWISHS…GAELPFTIDK (442 aa). Positions 36-90 are hypervariable stalk region; it reads HSIQTGSQNHTGTCNQSIITYKNSTWVNQTYVNISNTNVVAGKDTTSVILAGNSS. N-linked (GlcNAc...) asparagine; by host glycans are attached at residues Asn44, Asn50, Asn58, Asn63, Asn68, and Asn88. A head of neuraminidase region spans residues 91 to 469; it reads LCPIRGWAIY…GAELPFTIDK (379 aa). 8 cysteine pairs are disulfide-bonded: Cys92/Cys417, Cys124/Cys129, Cys184/Cys231, Cys233/Cys238, Cys279/Cys292, Cys281/Cys290, Cys318/Cys335, and Cys421/Cys446. Residue Arg118 participates in substrate binding. The N-linked (GlcNAc...) asparagine; by host glycan is linked to Asn146. Asp151 functions as the Proton donor/acceptor in the catalytic mechanism. Arg152 lines the substrate pocket. A glycan (N-linked (GlcNAc...) asparagine; by host) is linked at Asn235. 277 to 278 is a binding site for substrate; sequence EE. Position 293 (Arg293) interacts with substrate. Ca(2+)-binding residues include Asp294, Gly298, Asp324, and Asn344. Asn365 carries N-linked (GlcNAc...) asparagine; by host glycosylation. Residue Arg368 coordinates substrate. Tyr402 (nucleophile) is an active-site residue.

It belongs to the glycosyl hydrolase 34 family. As to quaternary structure, homotetramer. It depends on Ca(2+) as a cofactor. N-glycosylated.

Its subcellular location is the virion membrane. It is found in the host apical cell membrane. It carries out the reaction Hydrolysis of alpha-(2-&gt;3)-, alpha-(2-&gt;6)-, alpha-(2-&gt;8)- glycosidic linkages of terminal sialic acid residues in oligosaccharides, glycoproteins, glycolipids, colominic acid and synthetic substrates.. With respect to regulation, inhibited by the neuraminidase inhibitors zanamivir (Relenza) and oseltamivir (Tamiflu). These drugs interfere with the release of progeny virus from infected cells and are effective against all influenza strains. Resistance to neuraminidase inhibitors is quite rare. Its function is as follows. Catalyzes the removal of terminal sialic acid residues from viral and cellular glycoconjugates. Cleaves off the terminal sialic acids on the glycosylated HA during virus budding to facilitate virus release. Additionally helps virus spread through the circulation by further removing sialic acids from the cell surface. These cleavages prevent self-aggregation and ensure the efficient spread of the progeny virus from cell to cell. Otherwise, infection would be limited to one round of replication. Described as a receptor-destroying enzyme because it cleaves a terminal sialic acid from the cellular receptors. May facilitate viral invasion of the upper airways by cleaving the sialic acid moieties on the mucin of the airway epithelial cells. Likely to plays a role in the budding process through its association with lipid rafts during intracellular transport. May additionally display a raft-association independent effect on budding. Plays a role in the determination of host range restriction on replication and virulence. Sialidase activity in late endosome/lysosome traffic seems to enhance virus replication. The protein is Neuraminidase of Aves (Human).